A 227-amino-acid chain; its full sequence is Potassium/proton antiporter CemA (227 aa).

The next 4 membrane-spanning stretches (helical) occupy residues 5–25 (SISL…SFTF), 112–132 (IICF…LILI), 143–163 (LSDT…IGFH), and 187–207 (IISG…KYWI).

It belongs to the CemA family.

It localises to the plastid. The protein localises to the chloroplast inner membrane. It catalyses the reaction K(+)(in) + H(+)(out) = K(+)(out) + H(+)(in). Functionally, contributes to K(+)/H(+) antiport activity by supporting proton efflux to control proton extrusion and homeostasis in chloroplasts in a light-dependent manner to modulate photosynthesis. Prevents excessive induction of non-photochemical quenching (NPQ) under continuous-light conditions. Indirectly promotes efficient inorganic carbon uptake into chloroplasts. This Phaseolus vulgaris (Kidney bean) protein is Potassium/proton antiporter CemA.